The following is a 273-amino-acid chain: MAIVKCKPTSAGRRHVVKIVNPELHKGKPYAPLLDTKSKTGGRNNFGRITTRHIGGGHKQHYRLIDFKRNKLDIPAVVERLEYDPNRSANIALVLYKDGERRYILAPKGLSAGDTIQSGANAPIKVGNALPMRNIPVGSTVHNVELKPGKGGQIARSAGAYVQIIAREGNYVTLRLRSGEMRKVLAECTATIGEVGNSEHMLRVLGKAGANRWRGIRPTVRGTAMNPVDHPHGGGEGRNFGKHPVTPWGVQTKGKKTRHNKRTDKFIVRRRGK.

2 disordered regions span residues 30 to 50 (YAPL…GRIT) and 221 to 273 (RGTA…RRGK). Over residues 253-273 (KGKKTRHNKRTDKFIVRRRGK) the composition is skewed to basic residues.

Belongs to the universal ribosomal protein uL2 family. Part of the 50S ribosomal subunit. Forms a bridge to the 30S subunit in the 70S ribosome.

Its function is as follows. One of the primary rRNA binding proteins. Required for association of the 30S and 50S subunits to form the 70S ribosome, for tRNA binding and peptide bond formation. It has been suggested to have peptidyltransferase activity; this is somewhat controversial. Makes several contacts with the 16S rRNA in the 70S ribosome. The sequence is that of Large ribosomal subunit protein uL2 from Pasteurella multocida (strain Pm70).